We begin with the raw amino-acid sequence, 88 residues long: UPF0297 protein SGO_2042 (88 aa).

This sequence belongs to the UPF0297 family.

The sequence is that of UPF0297 protein SGO_2042 from Streptococcus gordonii (strain Challis / ATCC 35105 / BCRC 15272 / CH1 / DL1 / V288).